The chain runs to 185 residues: UPF0669 protein C6orf120 homolog (185 aa).

The first 23 residues, 1-23 (MAARWRRILIVFVAAQVLCLVNT), serve as a signal peptide directing secretion. An N-linked (GlcNAc...) asparagine glycan is attached at Asn-47.

This sequence belongs to the UPF0669 family.

The protein localises to the secreted. In Gallus gallus (Chicken), this protein is UPF0669 protein C6orf120 homolog.